The following is a 317-amino-acid chain: tRNA-dihydrouridine(16) synthase (317 aa).

FMN is bound by residues 7 to 9 and glutamine 68; that span reads PME. The active-site Proton donor is the cysteine 98. FMN is bound by residues lysine 139, 199–201, and 223–224; these read NGE and GR.

The protein belongs to the Dus family. DusC subfamily. FMN is required as a cofactor.

The enzyme catalyses 5,6-dihydrouridine(16) in tRNA + NADP(+) = uridine(16) in tRNA + NADPH + H(+). It catalyses the reaction 5,6-dihydrouridine(16) in tRNA + NAD(+) = uridine(16) in tRNA + NADH + H(+). Functionally, catalyzes the synthesis of 5,6-dihydrouridine (D), a modified base found in the D-loop of most tRNAs, via the reduction of the C5-C6 double bond in target uridines. Specifically modifies U16 in tRNAs. This Pseudomonas syringae pv. tomato (strain ATCC BAA-871 / DC3000) protein is tRNA-dihydrouridine(16) synthase.